Here is a 139-residue protein sequence, read N- to C-terminus: NADPH-dependent 7-cyano-7-deazaguanine reductase (139 aa).

Cys34 acts as the Thioimide intermediate in catalysis. Residue Asp41 is the Proton donor of the active site. Residues 56–58 (VEL) and 75–76 (HE) each bind substrate.

It belongs to the GTP cyclohydrolase I family. QueF type 1 subfamily.

The protein resides in the cytoplasm. The catalysed reaction is 7-aminomethyl-7-carbaguanine + 2 NADP(+) = 7-cyano-7-deazaguanine + 2 NADPH + 3 H(+). It participates in tRNA modification; tRNA-queuosine biosynthesis. Functionally, catalyzes the NADPH-dependent reduction of 7-cyano-7-deazaguanine (preQ0) to 7-aminomethyl-7-deazaguanine (preQ1). This Thiobacillus denitrificans (strain ATCC 25259 / T1) protein is NADPH-dependent 7-cyano-7-deazaguanine reductase.